Consider the following 532-residue polypeptide: Cytochrome P450 monooxygenase criE (532 aa).

Residues 18–38 traverse the membrane as a helical segment; sequence VSPAALSWAVVAVYIGTFFWL. Position 441 (Cys441) interacts with heme.

This sequence belongs to the cytochrome P450 family. Heme serves as cofactor.

The protein localises to the membrane. The catalysed reaction is preechinulin + reduced [NADPH--hemoprotein reductase] + O2 = neoechinulin A + oxidized [NADPH--hemoprotein reductase] + 2 H2O + H(+). Its pathway is secondary metabolite biosynthesis. It participates in alkaloid biosynthesis. Functionally, cytochrome P450 monooxygenase; part of the gene cluster that mediates the biosynthesis of echinulin family alkaloid. The pathway begins with the biosynthesis of the cyclic dipeptide cyclo-L-Trp-L-Ala (cyclo-TA) by the NRPS criC via condensation of L-alanine and L-tryptophan. The prenyltransferase criA then catalyzes the first prenylation step, a reverse prenylation reaction at C2, to yield preechinulin. Preechinulin is the substrate of the cytochrome P450 monooxygenase criE that catalyzes the formation of the double bond between C10 and C11 to produce neoechulin A. The unique prenyltransferase criF functions as a competitive enzyme with criE for preechinulin metabolization and uses preechinulin for effective regiospecific prenylations. Preechinulin is prenylated by criF at C5 or C7. C7-prenylation leads to accumulation of tardioxopiperazine B without further modification by criF. In contrast, the C5-prenylated tardioxopiperazine A can be prenylated again by criF, predominantly at C7 to form echinulin or less frequently at C4 to give variecolorin L. CriF also accepts neoechilunin A to produce varlecolorin G (prenylation at C5) or isoechinulin A (prenylation at C7). CriF further converts isoechinulin A into dehydroechinulin. Moreover, a yet unidentified enzyme can also convert neoechilunin A into neoechilunin B by introducing a double bond between positions C14 and C17 and thus provides a further substrate to criF for C5 and C7 prenylation. The polypeptide is Cytochrome P450 monooxygenase criE (Aspergillus cristatus (Chinese Fuzhuan brick tea-fermentation fungus)).